Reading from the N-terminus, the 119-residue chain is uncharacterized protein (119 aa).

This is an uncharacterized protein from Shigella flexneri.